Reading from the N-terminus, the 415-residue chain is Probable G-protein coupled receptor 19 (415 aa).

Residues 1-69 (MGFDHRMETD…LNPGEVATAS (69 aa)) lie on the Extracellular side of the membrane. Residues asparagine 25 and asparagine 52 are each glycosylated (N-linked (GlcNAc...) asparagine). Residues 70-90 (IFFGALWLFSIFGNSLVCLVI) traverse the membrane as a helical segment. The Cytoplasmic segment spans residues 91–102 (HRSRRTQSTTNY). A helical transmembrane segment spans residues 103 to 123 (FVVSMACADLLISVASTPFVV). Residues 124 to 152 (LQFTTGRWTLGSAMCKVVRYFQYLTPGVQ) lie on the Extracellular side of the membrane. Residues cysteine 138 and cysteine 210 are joined by a disulfide bond. A helical transmembrane segment spans residues 153–173 (IYVLLSICIDRFYTIVYPLSF). Residues 174–182 (KVSREKAKR) lie on the Cytoplasmic side of the membrane. The chain crosses the membrane as a helical span at residues 183-203 (MIAASWILDAAFVTPVFFFYG). At 204–221 (SNWDSHCNYFLPPSWEGT) the chain is on the extracellular side. A helical transmembrane segment spans residues 222–242 (AYTVIHFLVGFVIPSVLIILF). The Cytoplasmic portion of the chain corresponds to 243-277 (YQKVIKYIWRIGTDGRTLRRTMNIVPRTKVKTVKM). A helical membrane pass occupies residues 278 to 298 (FLLLNLVFLFSWLPFHVAQLW). The Extracellular portion of the chain corresponds to 299 to 309 (HPHEQDYRKSS). The helical transmembrane segment at 310-332 (LVFTAVTWVSFSSSASKPTLYSI) threads the bilayer. The Cytoplasmic portion of the chain corresponds to 333 to 415 (YNANFRRGMK…INSNPPNTFV (83 aa)).

Belongs to the G-protein coupled receptor 1 family. In terms of tissue distribution, abundant expression in the brain.

It localises to the cell membrane. In terms of biological role, G-protein coupled receptor that plays a role in the regulation of circadian rhythms and energy metabolism. Participates in maintaining proper circadian gene expression in the suprachiasmatic nucleus (SCN), the locus of the master circadian clock in the brain. May function as a coordinator of aging-associated metabolic dysfunction, stress response, DNA integrity management, and eventual senescence. Upon binding to adropin, modulates mitochondrial energy metabolism via the p44/42-PDK4 signaling pathway, influencing pyruvate dehydrogenase activity. The sequence is that of Probable G-protein coupled receptor 19 (Gpr19) from Rattus norvegicus (Rat).